Consider the following 209-residue polypeptide: Large ribosomal subunit protein uL4 (209 aa).

Residues 45-78 are disordered; sequence RQGTHKAKERAEVAGSTRKIKKQKGTGTARAGSA.

It belongs to the universal ribosomal protein uL4 family. Part of the 50S ribosomal subunit.

Its function is as follows. One of the primary rRNA binding proteins, this protein initially binds near the 5'-end of the 23S rRNA. It is important during the early stages of 50S assembly. It makes multiple contacts with different domains of the 23S rRNA in the assembled 50S subunit and ribosome. Functionally, forms part of the polypeptide exit tunnel. The protein is Large ribosomal subunit protein uL4 of Flavobacterium psychrophilum (strain ATCC 49511 / DSM 21280 / CIP 103535 / JIP02/86).